The chain runs to 756 residues: Polyribonucleotide nucleotidyltransferase (756 aa).

Mg(2+) contacts are provided by Asp-532 and Asp-538. Positions 598-657 (PRVTAIKVPVDKIGEVIGPKGKMINSITEQTGANISIEDDGTVFVGATDGPSAQAAIDMI) constitute a KH domain. The 70-residue stretch at 669-738 (GERFLGTVVK…ARGKISLIPV (70 aa)) folds into the S1 motif domain.

Belongs to the polyribonucleotide nucleotidyltransferase family. Requires Mg(2+) as cofactor.

The protein resides in the cytoplasm. It carries out the reaction RNA(n+1) + phosphate = RNA(n) + a ribonucleoside 5'-diphosphate. In terms of biological role, involved in mRNA degradation. Catalyzes the phosphorolysis of single-stranded polyribonucleotides processively in the 3'- to 5'-direction. This Rhodococcus erythropolis (strain PR4 / NBRC 100887) protein is Polyribonucleotide nucleotidyltransferase.